A 2890-amino-acid chain; its full sequence is Bifunctional DNA-directed RNA polymerase subunit beta-beta' (2890 aa).

Residues 1 to 1377 (MSKKIPLKNR…DINIFGDEMD (1377 aa)) are DNA-directed RNA polymerase subunit beta. The tract at residues 1384–2890 (PIVIKEDDRP…LRTIEDSPKI (1507 aa)) is DNA-directed RNA polymerase subunit beta'. Residues cysteine 1449, cysteine 1451, cysteine 1465, and cysteine 1468 each contribute to the Zn(2+) site. Residues aspartate 1849, aspartate 1851, and aspartate 1853 each contribute to the Mg(2+) site. Zn(2+) contacts are provided by cysteine 2179, cysteine 2253, cysteine 2260, and cysteine 2263.

In the N-terminal section; belongs to the RNA polymerase beta chain family. It in the C-terminal section; belongs to the RNA polymerase beta' chain family. As to quaternary structure, the RNAP catalytic core consists of 2 alpha, 1 beta/beta' and 1 omega subunit. When a sigma factor is associated with the core the holoenzyme is formed, which can initiate transcription. Mg(2+) is required as a cofactor. The cofactor is Zn(2+).

It catalyses the reaction RNA(n) + a ribonucleoside 5'-triphosphate = RNA(n+1) + diphosphate. In terms of biological role, DNA-dependent RNA polymerase catalyzes the transcription of DNA into RNA using the four ribonucleoside triphosphates as substrates. The chain is Bifunctional DNA-directed RNA polymerase subunit beta-beta' (rpoBC) from Helicobacter acinonychis (strain Sheeba).